We begin with the raw amino-acid sequence, 217 residues long: NAD(P)H-hydrate epimerase (217 aa).

The YjeF N-terminal domain occupies M1 to S217. N48–D52 is a (6S)-NADPHX binding site. Positions 49 and 127 each coordinate K(+). (6S)-NADPHX-binding positions include G131 to P137 and D165. Position 168 (T168) interacts with K(+).

Belongs to the NnrE/AIBP family. The cofactor is K(+).

The enzyme catalyses (6R)-NADHX = (6S)-NADHX. It catalyses the reaction (6R)-NADPHX = (6S)-NADPHX. In terms of biological role, catalyzes the epimerization of the S- and R-forms of NAD(P)HX, a damaged form of NAD(P)H that is a result of enzymatic or heat-dependent hydration. This is a prerequisite for the S-specific NAD(P)H-hydrate dehydratase to allow the repair of both epimers of NAD(P)HX. The chain is NAD(P)H-hydrate epimerase from Cereibacter sphaeroides (strain KD131 / KCTC 12085) (Rhodobacter sphaeroides).